The following is a 120-amino-acid chain: Large ribosomal subunit protein bL20 (120 aa).

The protein belongs to the bacterial ribosomal protein bL20 family.

Binds directly to 23S ribosomal RNA and is necessary for the in vitro assembly process of the 50S ribosomal subunit. It is not involved in the protein synthesizing functions of that subunit. The chain is Large ribosomal subunit protein bL20 from Xanthobacter autotrophicus (strain ATCC BAA-1158 / Py2).